Consider the following 494-residue polypeptide: MTHYILAIDQGTTSSRAILFDEKGSRVGQSQQEFPQIFPDDGWVEHDPEDIWSSTLAVCRSVLKDTGIDAQAIATIGITNQRETTILWDIDTGKPVYNAIVWQDRRTSGFCQSLSDQGLSEKVQEKTGLLIDPYFSATKIRWILDNVDGARETAQSGRLAFGTVDSFLLWRLTNGKSHKTDATNAARTMAFNIHTQEWDDELIELLGIGDVLFPEVMDCSADFGVIDASWLGAEIPVNGIAGDQQAALVGQACFTPGMVKSTYGTGCFMILNTGDKAIRSEHKLLTTVGYRLNGKVTYALEGSIFVAGAAIQWLRDGLKLFADAKETQSLAKQALNDDSVYLVPAFTGLGAPYWDPDARGAMIGLTRDTSVADIVSAGLRSVCYQTKDLVGAMAQDGATFSSLRVDGGMVINDVMVQFLSDLLEITVERPCVTETTALGAAFLAGLQVGLYQSLDEIEVLWKADKCFEPTMEKGTGDKLYQGWQKAVDRVRTRD.

Residue Thr-12 participates in ADP binding. Positions 12, 13, and 14 each coordinate ATP. Thr-12 provides a ligand contact to sn-glycerol 3-phosphate. Position 16 (Arg-16) interacts with ADP. Arg-82, Glu-83, Tyr-134, and Asp-243 together coordinate sn-glycerol 3-phosphate. Glycerol contacts are provided by Arg-82, Glu-83, Tyr-134, Asp-243, and Gln-244. ADP-binding residues include Thr-265 and Gly-308. ATP contacts are provided by Thr-265, Gly-308, Gln-312, and Gly-408. Residues Gly-408 and Asn-412 each coordinate ADP.

This sequence belongs to the FGGY kinase family.

The catalysed reaction is glycerol + ATP = sn-glycerol 3-phosphate + ADP + H(+). It participates in polyol metabolism; glycerol degradation via glycerol kinase pathway; sn-glycerol 3-phosphate from glycerol: step 1/1. With respect to regulation, inhibited by fructose 1,6-bisphosphate (FBP). In terms of biological role, key enzyme in the regulation of glycerol uptake and metabolism. Catalyzes the phosphorylation of glycerol to yield sn-glycerol 3-phosphate. In Marinomonas sp. (strain MWYL1), this protein is Glycerol kinase.